The sequence spans 137 residues: Acidic phospholipase A2 Vur-PL3 (137 aa).

The N-terminal stretch at 1 to 16 (MRTLWIVAVCLIGVEG) is a signal peptide. 7 disulfide bridges follow: cysteine 42–cysteine 131, cysteine 44–cysteine 60, cysteine 59–cysteine 111, cysteine 65–cysteine 137, cysteine 66–cysteine 104, cysteine 73–cysteine 97, and cysteine 91–cysteine 102. Ca(2+)-binding residues include tyrosine 43, glycine 45, and glycine 47. The active site involves histidine 63. Position 64 (aspartate 64) interacts with Ca(2+). Aspartate 105 is a catalytic residue.

Ca(2+) is required as a cofactor. In terms of tissue distribution, expressed by the venom gland.

Its subcellular location is the secreted. It carries out the reaction a 1,2-diacyl-sn-glycero-3-phosphocholine + H2O = a 1-acyl-sn-glycero-3-phosphocholine + a fatty acid + H(+). The polypeptide is Acidic phospholipase A2 Vur-PL3 (Vipera renardi (Steppe viper)).